The sequence spans 123 residues: Small ribosomal subunit protein uS12 (123 aa).

D89 bears the 3-methylthioaspartic acid mark. Positions 102–123 (LDTSGVQDRRQRRSKYGAKRPK) are disordered. A compositionally biased stretch (basic residues) spans 111–123 (RQRRSKYGAKRPK).

The protein belongs to the universal ribosomal protein uS12 family. In terms of assembly, part of the 30S ribosomal subunit. Contacts proteins S8 and S17. May interact with IF1 in the 30S initiation complex.

In terms of biological role, with S4 and S5 plays an important role in translational accuracy. Functionally, interacts with and stabilizes bases of the 16S rRNA that are involved in tRNA selection in the A site and with the mRNA backbone. Located at the interface of the 30S and 50S subunits, it traverses the body of the 30S subunit contacting proteins on the other side and probably holding the rRNA structure together. The combined cluster of proteins S8, S12 and S17 appears to hold together the shoulder and platform of the 30S subunit. This Lawsonia intracellularis (strain PHE/MN1-00) protein is Small ribosomal subunit protein uS12.